A 355-amino-acid polypeptide reads, in one-letter code: Histidinol-phosphate aminotransferase (355 aa).

The residue at position 218 (Lys-218) is an N6-(pyridoxal phosphate)lysine.

It belongs to the class-II pyridoxal-phosphate-dependent aminotransferase family. Histidinol-phosphate aminotransferase subfamily. In terms of assembly, homodimer. It depends on pyridoxal 5'-phosphate as a cofactor.

It catalyses the reaction L-histidinol phosphate + 2-oxoglutarate = 3-(imidazol-4-yl)-2-oxopropyl phosphate + L-glutamate. It functions in the pathway amino-acid biosynthesis; L-histidine biosynthesis; L-histidine from 5-phospho-alpha-D-ribose 1-diphosphate: step 7/9. In Pelodictyon phaeoclathratiforme (strain DSM 5477 / BU-1), this protein is Histidinol-phosphate aminotransferase.